The following is a 445-amino-acid chain: Interferon-activable protein 202 (445 aa).

A compositionally biased stretch (polar residues) spans 1-27; sequence MSNRNLRSSTNSEFSEGQHQTPSSDSS. A disordered region spans residues 1 to 57; sequence MSNRNLRSSTNSEFSEGQHQTPSSDSSGHGEDQPQASPGPNKKSHTPKKNISKGAVL. Residues 42-51 are compositionally biased toward basic residues; the sequence is KKSHTPKKNI. HIN-200 domains lie at 46 to 243 and 244 to 441; these read TPKK…IKGE and KLLK…MEVI. Required for homomultimerization stretches follow at residues 82–89 and 281–288; these read MFHATVAT.

This sequence belongs to the HIN-200 family. As to quaternary structure, homomultimer; homotetramerizes (via HIN-200 domain 2), enhancing affinity for double-stranded DNA (dsDNA). Interacts (via HIN-200 domain 2) with AIM2 (via HIN-200 domain); preventing activation of the AIM2 inflammasome. Binds to several transcription factors, including NF-kappa-B p50 (NFKB1) and p65 (RELA), FOS, JUN, E2F1, E2F4, MYOD1 and myogenin. Also binds TP53/p53, the hypophosphorylated, growth-inhibitory form of the retinoblastoma protein and the p53-binding protein 1 (TP53BP1). Phosphorylated.

Its subcellular location is the cytoplasm. The protein resides in the nucleus. Functionally, DNA-binding protein involved in innate immune response and has anti-inflammatory activity. Inhibits caspase activation in response to cytosolic DNA by preventing activation of the AIM2 inflammasome, probably by sequestering cytoplasmic DNA and preventing its being bound by AIM2. Also inhibits activation of the AIM2 inflammasome via a direct interaction with AIM2, which prevents the interaction between AIM2 and PYCARD and formation of the AIM2 inflammasome. Binds double-stranded DNA (dsDNA) in the cytosol. Has anti-apoptotic effects due to inhibition of the transcriptional activity of TP53/p53. Inhibits the transcriptional activity of several transcription factors, including NF-kappa-B p50 and p65, FOS, JUN, E2F1, E2F4, MYOD1 and myogenin. The chain is Interferon-activable protein 202 from Mus musculus (Mouse).